Consider the following 400-residue polypeptide: Large envelope protein (400 aa).

M1 carries the post-translational modification N-acetylmethionine. Disordered regions lie at residues M1–A55 and L85–Q118. The N-myristoyl glycine; by host moiety is linked to residue G2. Positions G2–A119 are pre-S1. The interval G2 to N174 is pre-S. Residues G2–G181 lie on the Virion surface; in external conformation side of the membrane. Over G2–R253 the chain is Intravirion; in internal conformation. W4 is a glycosylation site (N-linked (GlcNAc...) asparagine). A compositionally biased stretch (polar residues) spans S96–T106. The interval M120–N174 is pre-S2. A helical membrane pass occupies residues F182–I202. Residues P203–R253 are Intravirion; in external conformation-facing. Residues F254 to F274 form a helical membrane-spanning segment. The Virion surface portion of the chain corresponds to Q275–S348. Residue N320 is glycosylated (N-linked (GlcNAc...) asparagine; by host). A helical membrane pass occupies residues L349–I369. The Intravirion segment spans residues W370 to W375. The helical transmembrane segment at G376–V398 threads the bilayer. At Y399 to I400 the chain is on the virion surface side.

It belongs to the orthohepadnavirus major surface antigen family. As to quaternary structure, in its internal form (Li-HBsAg), interacts with the capsid protein and with the isoform S. Interacts with host chaperone CANX. Associates with host chaperone CANX through its pre-S2 N glycan; this association may be essential for isoform M proper secretion. In terms of assembly, interacts with isoform L. Interacts with the antigens of satellite virus HDV (HDVAgs); this interaction is required for encapsidation of HDV genomic RNA. Post-translationally, isoform M is N-terminally acetylated by host at a ratio of 90%, and N-glycosylated by host at the pre-S2 region. Myristoylated.

The protein localises to the virion membrane. Functionally, the large envelope protein exists in two topological conformations, one which is termed 'external' or Le-HBsAg and the other 'internal' or Li-HBsAg. In its external conformation the protein attaches the virus to cell receptors and thereby initiating infection. This interaction determines the species specificity and liver tropism. This attachment induces virion internalization predominantly through caveolin-mediated endocytosis. The large envelope protein also assures fusion between virion membrane and endosomal membrane. In its internal conformation the protein plays a role in virion morphogenesis and mediates the contact with the nucleocapsid like a matrix protein. Its function is as follows. The middle envelope protein plays an important role in the budding of the virion. It is involved in the induction of budding in a nucleocapsid independent way. In this process the majority of envelope proteins bud to form subviral lipoprotein particles of 22 nm of diameter that do not contain a nucleocapsid. The chain is Large envelope protein from Hepatitis B virus genotype C subtype ar (isolate Japan/S-207/1988) (HBV-C).